The following is a 181-amino-acid chain: Inner membrane-spanning protein YciB (181 aa).

Transmembrane regions (helical) follow at residues 10-30 (LVIFFAVYKFFDIYIASGALI), 50-70 (MHLITFAMVSVFGSLTLILHD), 80-100 (IVYALFAIALAVSQFMNKPIL), 118-138 (VTWYWVLFFVVCGLVNIYVAF), and 148-168 (FKVFGLTALTLINTVLTVFYL).

It belongs to the YciB family.

The protein resides in the cell inner membrane. Its function is as follows. Plays a role in cell envelope biogenesis, maintenance of cell envelope integrity and membrane homeostasis. In Shewanella piezotolerans (strain WP3 / JCM 13877), this protein is Inner membrane-spanning protein YciB.